The primary structure comprises 54 residues: ATP synthase F(0) complex subunit 8 (54 aa).

A helical transmembrane segment spans residues 13-35 (ALSLWVCFPLMMLSLSSFLPLTL).

This sequence belongs to the ATPase protein 8 family. Component of the ATP synthase complex composed at least of ATP5F1A/subunit alpha, ATP5F1B/subunit beta, ATP5MC1/subunit c (homooctomer), MT-ATP6/subunit a, MT-ATP8/subunit 8, ATP5ME/subunit e, ATP5MF/subunit f, ATP5MG/subunit g, ATP5MK/subunit k, ATP5MJ/subunit j, ATP5F1C/subunit gamma, ATP5F1D/subunit delta, ATP5F1E/subunit epsilon, ATP5PF/subunit F6, ATP5PB/subunit b, ATP5PD/subunit d, ATP5PO/subunit OSCP. ATP synthase complex consists of a soluble F(1) head domain (subunits alpha(3) and beta(3)) - the catalytic core - and a membrane F(0) domain - the membrane proton channel (subunits c, a, 8, e, f, g, k and j). These two domains are linked by a central stalk (subunits gamma, delta, and epsilon) rotating inside the F1 region and a stationary peripheral stalk (subunits F6, b, d, and OSCP).

Its subcellular location is the mitochondrion membrane. Its function is as follows. Subunit 8, of the mitochondrial membrane ATP synthase complex (F(1)F(0) ATP synthase or Complex V) that produces ATP from ADP in the presence of a proton gradient across the membrane which is generated by electron transport complexes of the respiratory chain. ATP synthase complex consist of a soluble F(1) head domain - the catalytic core - and a membrane F(1) domain - the membrane proton channel. These two domains are linked by a central stalk rotating inside the F(1) region and a stationary peripheral stalk. During catalysis, ATP synthesis in the catalytic domain of F(1) is coupled via a rotary mechanism of the central stalk subunits to proton translocation. In vivo, can only synthesize ATP although its ATP hydrolase activity can be activated artificially in vitro. Part of the complex F(0) domain. The polypeptide is ATP synthase F(0) complex subunit 8 (Myxine glutinosa (Atlantic hagfish)).